We begin with the raw amino-acid sequence, 415 residues long: Actin-like protein 7B (415 aa).

Residues Met1–Arg31 form a disordered region. Ser6 carries the post-translational modification Phosphoserine.

It belongs to the actin family. Detected only in the testis and, to a lesser extent, in the prostate.

It localises to the cytoplasm. The protein localises to the cytoskeleton. The polypeptide is Actin-like protein 7B (ACTL7B) (Homo sapiens (Human)).